A 200-amino-acid polypeptide reads, in one-letter code: Protein GrpE (200 aa).

This sequence belongs to the GrpE family. Homodimer.

It localises to the cytoplasm. Its function is as follows. Participates actively in the response to hyperosmotic and heat shock by preventing the aggregation of stress-denatured proteins, in association with DnaK and GrpE. It is the nucleotide exchange factor for DnaK and may function as a thermosensor. Unfolded proteins bind initially to DnaJ; upon interaction with the DnaJ-bound protein, DnaK hydrolyzes its bound ATP, resulting in the formation of a stable complex. GrpE releases ADP from DnaK; ATP binding to DnaK triggers the release of the substrate protein, thus completing the reaction cycle. Several rounds of ATP-dependent interactions between DnaJ, DnaK and GrpE are required for fully efficient folding. In Shewanella piezotolerans (strain WP3 / JCM 13877), this protein is Protein GrpE.